The sequence spans 175 residues: RNA pyrophosphohydrolase (175 aa).

Residues 6–149 enclose the Nudix hydrolase domain; sequence GYRPNVGIVI…KRDVYRRVMK (144 aa). Residues 38–59 carry the Nudix box motif; sequence GGINPGETAEQAMYRELFEEVG.

This sequence belongs to the Nudix hydrolase family. RppH subfamily. The cofactor is a divalent metal cation.

Its function is as follows. Accelerates the degradation of transcripts by removing pyrophosphate from the 5'-end of triphosphorylated RNA, leading to a more labile monophosphorylated state that can stimulate subsequent ribonuclease cleavage. This Serratia proteamaculans (strain 568) protein is RNA pyrophosphohydrolase.